The chain runs to 469 residues: 23S rRNA (uracil(1939)-C(5))-methyltransferase RlmD (469 aa).

Positions 11–69 constitute a TRAM domain; it reads PKTSNQRLTVTVDKLDMNGVGVARWQNKPIFIAGVLPDEIVDVKVIEQKSKYARAKLIS. 4 residues coordinate [4Fe-4S] cluster: Cys-82, Cys-88, Cys-91, and Cys-178. S-adenosyl-L-methionine-binding residues include Gln-300, Phe-329, Asn-334, Glu-350, Asp-377, and Asp-399. The Nucleophile role is filled by Cys-425.

Belongs to the class I-like SAM-binding methyltransferase superfamily. RNA M5U methyltransferase family. RlmD subfamily.

The catalysed reaction is uridine(1939) in 23S rRNA + S-adenosyl-L-methionine = 5-methyluridine(1939) in 23S rRNA + S-adenosyl-L-homocysteine + H(+). In terms of biological role, catalyzes the formation of 5-methyl-uridine at position 1939 (m5U1939) in 23S rRNA. In Colwellia psychrerythraea (strain 34H / ATCC BAA-681) (Vibrio psychroerythus), this protein is 23S rRNA (uracil(1939)-C(5))-methyltransferase RlmD.